The primary structure comprises 795 residues: Outer membrane protein assembly factor BamA (795 aa).

A signal peptide spans 1–19 (MKKLLIASLLFGTTTTVFA). POTRA domains follow at residues 22–89 (FVAK…VVAK), 90–170 (SIIS…INED), 173–259 (AKLA…VNEG), 262–341 (YDLR…VDAG), and 344–418 (LTVR…VKER).

Belongs to the BamA family. Part of the Bam complex.

The protein localises to the cell outer membrane. In terms of biological role, part of the outer membrane protein assembly complex, which is involved in assembly and insertion of beta-barrel proteins into the outer membrane. The polypeptide is Outer membrane protein assembly factor BamA (Haemophilus influenzae (strain ATCC 51907 / DSM 11121 / KW20 / Rd)).